Reading from the N-terminus, the 185-residue chain is Ribosome hibernation promotion factor (185 aa).

The segment at 1-125 (MIKFNIRGEN…PLDTTDEVAE (125 aa)) is probably still associates with ribosome. The tract at residues 126-185 (DHVDIVRTKHVALKPMDAEEAVLQMDMLGHDFYVFTDADSNGTHVVYRRTDGRYGLIETE) is required but not sufficient to restore ribosome dimerization, in vitro will replace E.coli RMF in ribosome dimerization.

This sequence belongs to the HPF/YfiA ribosome-associated protein family. Long HPF subfamily. Interacts with 100S ribosomes in stationary phase; alters the relative position of the 30S and 50S subunits.

It is found in the cytoplasm. Its function is as follows. Required for dimerization of active 70S ribosomes into 100S ribosomes in stationary phase; 100S ribosomes are translationally inactive and sometimes present during exponential growth. Able to dimerize E.coli 70S ribosomes in vitro. This Lactococcus lactis subsp. cremoris (strain MG1363) protein is Ribosome hibernation promotion factor.